A 540-amino-acid polypeptide reads, in one-letter code: 2-isopropylmalate synthase (540 aa).

The 266-residue stretch at 8-273 (VLIFDTTLRD…FFGRDEDSPT (266 aa)) folds into the Pyruvate carboxyltransferase domain. Mn(2+) contacts are provided by D17, H208, H210, and N244. Residues 408-540 (QLKLVQVSCG…MAQLDSSPVH (133 aa)) are regulatory domain.

The protein belongs to the alpha-IPM synthase/homocitrate synthase family. LeuA type 1 subfamily. As to quaternary structure, homodimer. Requires Mn(2+) as cofactor.

It is found in the cytoplasm. It carries out the reaction 3-methyl-2-oxobutanoate + acetyl-CoA + H2O = (2S)-2-isopropylmalate + CoA + H(+). It participates in amino-acid biosynthesis; L-leucine biosynthesis; L-leucine from 3-methyl-2-oxobutanoate: step 1/4. Catalyzes the condensation of the acetyl group of acetyl-CoA with 3-methyl-2-oxobutanoate (2-ketoisovalerate) to form 3-carboxy-3-hydroxy-4-methylpentanoate (2-isopropylmalate). In Synechococcus sp. (strain CC9311), this protein is 2-isopropylmalate synthase.